The following is a 55-amino-acid chain: Large ribosomal subunit protein bL33 (55 aa).

The protein belongs to the bacterial ribosomal protein bL33 family.

This Methylocella silvestris (strain DSM 15510 / CIP 108128 / LMG 27833 / NCIMB 13906 / BL2) protein is Large ribosomal subunit protein bL33.